The following is a 242-amino-acid chain: Agamous-like MADS-box protein AGL8 (242 aa).

The 55-residue stretch at 3-57 (RGRVQLKRIENKINRQVTFSKRRSGLLKKAHEISVLCDAEVALIVFSSKGKLFEY) folds into the MADS-box domain. The 91-residue stretch at 88 to 178 (SENWVLEHAK…LKKIKEREKK (91 aa)) folds into the K-box domain. A coiled-coil region spans residues 89 to 178 (ENWVLEHAKL…LKKIKEREKK (90 aa)).

As to quaternary structure, homodimer capable of binding to CArG-box sequences. In terms of tissue distribution, vascular tissue of cauline leaves, floral shoot apex and valves of carpels and fruits.

The protein resides in the nucleus. Its function is as follows. Probable transcription factor that promotes early floral meristem identity in synergy with APETALA1 and CAULIFLOWER. Is required subsequently for the transition of an inflorescence meristem into a floral meristem. Seems to be partially redundant to the function of APETALA1 and CAULIFLOWER in the up-regulation of LEAFY. Is also required for normal pattern of cell division, expansion and differentiation during morphogenesis of the silique. Probably not required for fruit elongation but instead is required to prevent ectopic activity of IND. Represses SAUR10 expression in stems and inflorescence branches. The polypeptide is Agamous-like MADS-box protein AGL8 (AGL8) (Arabidopsis thaliana (Mouse-ear cress)).